A 1624-amino-acid chain; its full sequence is Latent-transforming growth factor beta-binding protein 4 (1624 aa).

Residues 1–27 form the signal peptide; the sequence is MPRPGTSGRRPLLLVLLLPLFAAATSA. The segment at 125-146 is disordered; it reads RRPRGPGGRGLLRRRPPQRAPA. An EGF-like 1 domain is found at 149-181; it reads APVLCPLICHNGGVCVKPDRCLCPPDFAGKFCQ. Intrachain disulfides connect Cys153–Cys163, Cys157–Cys169, Cys171–Cys180, Cys289–Cys311, Cys298–Cys324, and Cys312–Cys327. Positions 287–339 constitute a TB 1 domain; the sequence is GYCFRELRGGECASPLPGLRTQEVCCRGAGLAWGVHDCQLCSERLGNSERVSA. An N-linked (GlcNAc...) asparagine glycan is attached at Asn352. Residues 357–397 enclose the EGF-like 2; calcium-binding domain; sequence DVDECATGGRCQHGECANTRGGYTCVCPDGFLLDSSRSSCI. 7 cysteine pairs are disulfide-bonded: Cys361-Cys372, Cys367-Cys381, Cys383-Cys396, Cys409-Cys431, Cys418-Cys444, Cys432-Cys447, and Cys433-Cys459. Residues 407–459 enclose the TB 2 domain; it reads GPCFRVLRDGGCSLPILRNITKQICCCSRVGKAWGRGCQLCPPFGSEGFREIC. Asn425 carries an N-linked (GlcNAc...) asparagine glycan. A disordered region spans residues 474-546; that stretch reads YNTRPLGQEP…PEIPESGPSS (73 aa). Over residues 487–500 the composition is skewed to polar residues; sequence SLSQPRTLPATSRP. A compositionally biased stretch (basic and acidic residues) spans 508 to 522; it reads HRLEPRPEPRPDPRP. The region spanning 545–586 is the EGF-like 3 domain; the sequence is SSGMCQRNPQVCGPGRCISRPSGYTCACDSGFRLSPQGTRCI. 30 disulfides stabilise this stretch: Cys549–Cys561, Cys556–Cys570, Cys572–Cys585, Cys591–Cys603, Cys598–Cys612, Cys614–Cys627, Cys633–Cys645, Cys640–Cys654, Cys656–Cys669, Cys675–Cys687, Cys682–Cys696, Cys698–Cys707, Cys714–Cys726, Cys721–Cys735, Cys737–Cys750, Cys756–Cys768, Cys763–Cys777, Cys779–Cys792, Cys838–Cys851, Cys845–Cys860, Cys862–Cys876, Cys882–Cys894, Cys888–Cys903, Cys905–Cys918, Cys924–Cys935, Cys930–Cys944, Cys946–Cys959, Cys1053–Cys1065, Cys1059–Cys1074, and Cys1076–Cys1089. One can recognise an EGF-like 4; calcium-binding domain in the interval 587–628; sequence DVDECRRVPPPCAPGRCENSPGSFRCVCGPGFRAGPRAAECL. The EGF-like 5; calcium-binding domain maps to 629 to 670; the sequence is DVDECHRVPPPCDLGRCENTPGSFLCVCPAGYQAAPHGASCQ. The region spanning 671–708 is the EGF-like 6; calcium-binding domain; it reads DVDECTQSPGLCGRGACKNLPGSFRCVCPAGFRGSACE. Positions 710 to 751 constitute an EGF-like 7; calcium-binding domain; sequence DVDECAQEPPPCGPGRCDNTAGSFHCACPAGFRSRGPGAPCQ. An EGF-like 8; calcium-binding domain is found at 752-793; the sequence is DVDECARSPPPCTYGRCENTEGSFQCVCPMGFQPNTAGSECE. The EGF-like 9; calcium-binding domain maps to 834–877; it reads DVDECSSGAPPCGPHGHCTNTEGSFRCSCAPGYRAPSGRPGPCA. The 42-residue stretch at 878-919 folds into the EGF-like 10; calcium-binding domain; the sequence is DVNECLEGDFCFPHGECLNTDGSFACTCAPGYRPGPRGASCL. An EGF-like 11; calcium-binding domain is found at 920–960; sequence DVDECSEEDLCQSGICTNTDGSFECICPPGHRAGPDLASCL. An EGF-like 12; calcium-binding domain is found at 1049-1090; that stretch reads DVDECRNRSFCGAHAVCQNLPGSFQCLCDQGYEGARDGRHCV. The N-linked (GlcNAc...) asparagine glycan is linked to Asn1055. Residues 1130–1179 form a disordered region; sequence GRCVPPRTSAGTFPGSQPQAPASPVLPARPPPPPLPRRPSTPRQGPVGSG. A compositionally biased stretch (polar residues) spans 1138–1149; that stretch reads SAGTFPGSQPQA. Residues 1156 to 1168 are compositionally biased toward pro residues; the sequence is PARPPPPPLPRRP. The TB 3 domain maps to 1181–1235; it reads RECYFDTAAPDACDNILARNVTWQECCCTVGEGWGSGCRIQQCPGTETAEYQSLC. 10 cysteine pairs are disulfide-bonded: Cys1183-Cys1206, Cys1193-Cys1218, Cys1207-Cys1223, Cys1208-Cys1235, Cys1257-Cys1270, Cys1265-Cys1279, Cys1281-Cys1294, Cys1300-Cys1312, Cys1307-Cys1321, and Cys1323-Cys1336. Asn1200 carries N-linked (GlcNAc...) asparagine glycosylation. Positions 1253–1295 constitute an EGF-like 13; calcium-binding domain; that stretch reads DVDECQLFRDQVCKSGVCVNTAPGYSCYCSNGYYYHTQRLECI. The EGF-like 14; calcium-binding domain maps to 1296 to 1337; the sequence is DNDECADEEPACEGGRCVNTVGSYHCTCEPPLVLDGSQRRCV. N-linked (GlcNAc...) asparagine glycosylation is present at Asn1339. The region spanning 1349–1402 is the TB 4 domain; it reads GVCWQEVGADLVCSHPRLDRQATYTECCCLYGEAWGMDCALCPAQDSDDFEALC. 4 cysteine pairs are disulfide-bonded: Cys1351–Cys1375, Cys1361–Cys1387, Cys1376–Cys1390, and Cys1377–Cys1402. Over residues 1446 to 1458 the composition is skewed to pro residues; sequence ALPYDPYPPPPGP. The disordered stretch occupies residues 1446–1524; the sequence is ALPYDPYPPP…PPEGGSYAGS (79 aa). The segment covering 1501 to 1510 has biased composition (basic and acidic residues); that stretch reads RSRDTRRSFP. 2 consecutive EGF-like domains span residues 1533 to 1573 and 1574 to 1618; these read EAEE…MACV and DINE…HHCA. 6 cysteine pairs are disulfide-bonded: Cys1537/Cys1548, Cys1543/Cys1557, Cys1559/Cys1572, Cys1578/Cys1593, Cys1588/Cys1602, and Cys1604/Cys1617.

The protein belongs to the LTBP family. Forms part of the large latent transforming growth factor beta precursor complex; removal is essential for activation of complex. Interacts with LTBP1 and TGFB1. Interacts with EFEMP2; this interaction promotes fibrillar deposition of EFEMP2. In terms of processing, contains hydroxylated asparagine residues. As to expression, highly expressed in heart, skeletal muscle, pancreas, uterus, and small intestine. Weakly expressed in placenta and lung.

It is found in the secreted. The protein resides in the extracellular space. The protein localises to the extracellular matrix. Key regulator of transforming growth factor beta (TGFB1, TGFB2 and TGFB3) that controls TGF-beta activation by maintaining it in a latent state during storage in extracellular space. Associates specifically via disulfide bonds with the Latency-associated peptide (LAP), which is the regulatory chain of TGF-beta, and regulates integrin-dependent activation of TGF-beta. This Homo sapiens (Human) protein is Latent-transforming growth factor beta-binding protein 4 (LTBP4).